The sequence spans 351 residues: N-acetyl-gamma-glutamyl-phosphate reductase (351 aa).

The active site involves C154.

It belongs to the NAGSA dehydrogenase family. Type 1 subfamily.

Its subcellular location is the cytoplasm. It catalyses the reaction N-acetyl-L-glutamate 5-semialdehyde + phosphate + NADP(+) = N-acetyl-L-glutamyl 5-phosphate + NADPH + H(+). Its pathway is amino-acid biosynthesis; L-arginine biosynthesis; N(2)-acetyl-L-ornithine from L-glutamate: step 3/4. Its function is as follows. Catalyzes the NADPH-dependent reduction of N-acetyl-5-glutamyl phosphate to yield N-acetyl-L-glutamate 5-semialdehyde. This chain is N-acetyl-gamma-glutamyl-phosphate reductase, found in Prochlorococcus marinus subsp. pastoris (strain CCMP1986 / NIES-2087 / MED4).